A 269-amino-acid polypeptide reads, in one-letter code: Putative pyruvate, phosphate dikinase regulatory protein (269 aa).

147 to 154 serves as a coordination point for ADP; the sequence is GLSRTSKT.

The protein belongs to the pyruvate, phosphate/water dikinase regulatory protein family. PDRP subfamily.

The enzyme catalyses N(tele)-phospho-L-histidyl/L-threonyl-[pyruvate, phosphate dikinase] + ADP = N(tele)-phospho-L-histidyl/O-phospho-L-threonyl-[pyruvate, phosphate dikinase] + AMP + H(+). It carries out the reaction N(tele)-phospho-L-histidyl/O-phospho-L-threonyl-[pyruvate, phosphate dikinase] + phosphate + H(+) = N(tele)-phospho-L-histidyl/L-threonyl-[pyruvate, phosphate dikinase] + diphosphate. Bifunctional serine/threonine kinase and phosphorylase involved in the regulation of the pyruvate, phosphate dikinase (PPDK) by catalyzing its phosphorylation/dephosphorylation. The sequence is that of Putative pyruvate, phosphate dikinase regulatory protein from Clostridium botulinum (strain 657 / Type Ba4).